Here is a 496-residue protein sequence, read N- to C-terminus: Matrilin-1 (496 aa).

Positions 1-22 are cleaved as a signal peptide; it reads MRVLSGTSLMLCSLLLLLQALC. Residues 23-222 form the VWFA 1 domain; that stretch reads SPGLAPQSRG…SRKFQEAFCV (200 aa). Asn76 carries an N-linked (GlcNAc...) asparagine glycan. The region spanning 223–263 is the EGF-like domain; that stretch reads VSDLCATGDHDCEQVCISSPGSYTCACHEGFTLNSDGKTCN. Disulfide bonds link Cys227–Cys238, Cys234–Cys247, and Cys249–Cys262. Residues 264–453 enclose the VWFA 2 domain; that stretch reads VCSGGGGSSA…GKKLQKKICV (190 aa). N-linked (GalNAc...) asparagine glycosylation is present at Asn344. Positions 467-495 form a coiled coil; that stretch reads QAKVEGLLQALTRKLEAVSKRLAILENTV.

As to quaternary structure, homotrimer. Part of a complex composed of MATN1 (via VWFA1 domain), type 2 collagens and type 6 collagens. Forms a complex (via covalent bonds) with ACAN; the interaction increases in abundance with increasing age of the organism via an increase in occupancy of MATN1 binding sites. Interacts with COMP. Post-translationally, N-glycosylated; reduces binding affinity for type 2 collagens.

It is found in the secreted. The protein localises to the extracellular space. Its subcellular location is the extracellular matrix. A major component of the extracellular matrix of non-articular cartilage. Binds to type 2 collagens and forms long concatenated protein networks as part of the extracellular matrix. Required for the network-like organization and bundling of collagen fibrils surrounding chondrocytes in the zones of maturation and hypertrophy. Required for mechanotransduction and adaption to mechanical loading in cartilage chondrocytes, resulting in an increase in expression of the extracellular matrix components ACAN and COL2A1. Acts as a moderator of angiogenesis in response to injury. The chain is Matrilin-1 from Homo sapiens (Human).